We begin with the raw amino-acid sequence, 92 residues long: Small ribosomal subunit protein uS19 (92 aa).

This sequence belongs to the universal ribosomal protein uS19 family.

Its function is as follows. Protein S19 forms a complex with S13 that binds strongly to the 16S ribosomal RNA. The protein is Small ribosomal subunit protein uS19 of Vibrio atlanticus (strain LGP32) (Vibrio splendidus (strain Mel32)).